The following is a 4963-amino-acid chain: Kettin homolog (4963 aa).

3 Ig-like domains span residues 18–105 (PTFI…TCIL), 133–220 (PSAP…EAIS), and 303–392 (PIIR…ARIE). Disordered regions lie at residues 396-420 (LSVPDERRKENQLREQQERDRQQQQ), 466-501 (RRQLEHEKRLRQQQQQQLFEREKSEKEERARLEEER), 557-578 (IRPHQQQQQHYQQQQQSPRQEV), 598-622 (QLYQHQHQQHQQQQQQPQEQQQQRF), and 652-696 (TNGG…GHEH). Composition is skewed to basic and acidic residues over residues 399–417 (PDERRKENQLREQQERDRQ), 466–475 (RRQLEHEKRL), and 484–501 (FEREKSEKEERARLEEER). A coiled-coil region spans residues 401 to 517 (ERRKENQLRE…KHLRQQQQTQ (117 aa)). The segment covering 557–576 (IRPHQQQQQHYQQQQQSPRQ) has biased composition (low complexity). Over residues 658-685 (AANGSAKTANGSANGSANGSAVHAANGG) the composition is skewed to low complexity. 20 Ig-like domains span residues 706-796 (PQFL…FSLN), 806-893 (PEFT…GRVV), 937-1027 (PKFE…ANIA), 1065-1155 (PNFH…ATII), 1199-1281 (FHCE…AELT), 1462-1554 (PKFL…ITVT), 1594-1687 (PPTF…ATIR), 1728-1819 (PAFV…VDIN), 1992-2085 (PPVF…IFLE), 2126-2217 (PTFT…CTVK), 2258-2350 (PKFV…ANFT), 2391-2481 (PQFI…AQLT), 2522-2613 (PKFV…GQLS), 2654-2745 (PSFV…ANVG), 2787-2878 (PQWV…ATVT), 2919-3010 (PNFL…ASIR), 3051-3141 (PAIT…ATLK), 3182-3273 (PRFI…ATIE), 3314-3407 (PAIV…FEVS), and 3448-3539 (PVFI…TKLT). C827 and C877 form a disulfide bridge. A disulfide bridge connects residues C1201 and C1265. C1618 and C1671 are oxidised to a cystine. Intrachain disulfides connect C2016/C2069 and C2148/C2201. A compositionally biased stretch (basic and acidic residues) spans 3567–3583 (EAPRPAREDAPDADHGP). Residues 3567–3590 (EAPRPAREDAPDADHGPPKFTSAL) are disordered. 5 consecutive Ig-like domains span residues 3584–3677 (PKFT…LKVV), 3720–3811 (PSFS…GKIA), 3821–3913 (PQVV…TKIT), 3962–4052 (PEFR…AKLA), and 4098–4185 (PQFT…ATLD). 2 disulfide bridges follow: C3606–C3659 and C3742–C3795. The required for F-actin binding stretch occupies residues 4193–4963 (RQTKLRPANF…TSQAKLTLSR (771 aa)). A compositionally biased stretch (basic and acidic residues) spans 4319–4329 (DQQEVGWERPD). Residues 4319–4357 (DQQEVGWERPDWAGQDGTSKLPGADEGRFKKLPTPAPEL) form a disordered region. Ig-like domains follow at residues 4546-4634 (PTIS…ANLT), 4645-4733 (PDFS…ARLN), 4752-4842 (PRFT…LVLT), and 4872-4960 (PHFI…AKLT).

Interacts (via Ig-like domains) with F-actin. As to expression, expressed in the pharyngeal, body wall, and anal depressor muscles. Expression in these muscles is higher in hermaphrodites than in males. Expressed in the vulva and the myoepithelial sheath of the proximal ovary. Expressed in the proximal gonad of males. Not expressed in the dense bodies of the obliquely striated body wall muscle.

It is found in the cytoplasm. It localises to the myofibril. Its subcellular location is the sarcomere. The protein localises to the cytoskeleton. In terms of biological role, positively regulates actin filament organization and provides mechanical stability to the myofibrils during body wall muscle contraction. Required for the organization of sarcomeric actin filaments and myosin protein myo-3 in striated body wall muscle cells. Not required for assembly of dense bodies, which are a type of integrin-based adhesion structure that link the plasma membrane to thin filaments of myofibrils, in body wall muscle. Not required for the atn-1 protein to localize to the dense bodies. This chain is Kettin homolog, found in Caenorhabditis elegans.